A 164-amino-acid polypeptide reads, in one-letter code: Cyanate hydratase (164 aa).

Residues Arg104, Glu107, and Ser130 contribute to the active site.

The protein belongs to the cyanase family.

The catalysed reaction is cyanate + hydrogencarbonate + 3 H(+) = NH4(+) + 2 CO2. Catalyzes the reaction of cyanate with bicarbonate to produce ammonia and carbon dioxide. The polypeptide is Cyanate hydratase (Botryotinia fuckeliana (strain B05.10) (Noble rot fungus)).